Reading from the N-terminus, the 361-residue chain is Eukaryotic translation initiation factor 3 subunit F (361 aa).

2 stretches are compositionally biased toward low complexity: residues 1-11 (MATPVVSASGP) and 21-42 (AAPA…AAAV). A disordered region spans residues 1–42 (MATPVVSASGPPATPAPAPVAAPASASASVPAPTPAPAAAAV). The residue at position 2 (Ala2) is an N-acetylalanine. Ser50 carries the post-translational modification Phosphoserine; by CDK11; in vitro. The segment covering 55–78 (AAAATTAAPGQTPASAQAPAQTPA) has biased composition (low complexity). The disordered stretch occupies residues 55 to 86 (AAAATTAAPGQTPASAQAPAQTPAPALPGPAL). One can recognise an MPN domain in the interval 96–226 (VRLHPVILAS…IKAYVSTLMG (131 aa)). Lys242 carries the N6-acetyllysine modification. At Ser262 the chain carries Phosphoserine.

This sequence belongs to the eIF-3 subunit F family. As to quaternary structure, component of the eukaryotic translation initiation factor 3 (eIF-3) complex, which is composed of 13 subunits: EIF3A, EIF3B, EIF3C, EIF3D, EIF3E, EIF3F, EIF3G, EIF3H, EIF3I, EIF3J, EIF3K, EIF3L and EIF3M. The eIF-3 complex appears to include 3 stable modules: module A is composed of EIF3A, EIF3B, EIF3G and EIF3I; module B is composed of EIF3F, EIF3H, and EIF3M; and module C is composed of EIF3C, EIF3D, EIF3E, EIF3K and EIF3L. EIF3C of module C binds EIF3B of module A and EIF3H of module B, thereby linking the three modules. EIF3J is a labile subunit that binds to the eIF-3 complex via EIF3B. The eIF-3 complex interacts with RPS6KB1 under conditions of nutrient depletion. Mitogenic stimulation leads to binding and activation of a complex composed of MTOR and RPTOR, leading to phosphorylation and release of RPS6KB1 and binding of EIF4B to eIF-3. Interacts with RNF139; the interaction leads to protein translation inhibitions in a ubiquitination-dependent manner. Interacts with DTX1, the interaction is required for deubiquitinating activity towards NOTCH1. In terms of processing, phosphorylation is enhanced upon serum stimulation. Phosphorylated during apoptosis by caspase-processed CDK11.

It localises to the cytoplasm. It carries out the reaction Thiol-dependent hydrolysis of ester, thioester, amide, peptide and isopeptide bonds formed by the C-terminal Gly of ubiquitin (a 76-residue protein attached to proteins as an intracellular targeting signal).. Its function is as follows. Component of the eukaryotic translation initiation factor 3 (eIF-3) complex, which is required for several steps in the initiation of protein synthesis. The eIF-3 complex associates with the 40S ribosome and facilitates the recruitment of eIF-1, eIF-1A, eIF-2:GTP:methionyl-tRNAi and eIF-5 to form the 43S pre-initiation complex (43S PIC). The eIF-3 complex stimulates mRNA recruitment to the 43S PIC and scanning of the mRNA for AUG recognition. The eIF-3 complex is also required for disassembly and recycling of post-termination ribosomal complexes and subsequently prevents premature joining of the 40S and 60S ribosomal subunits prior to initiation. The eIF-3 complex specifically targets and initiates translation of a subset of mRNAs involved in cell proliferation, including cell cycling, differentiation and apoptosis, and uses different modes of RNA stem-loop binding to exert either translational activation or repression. In terms of biological role, deubiquitinates activated NOTCH1, promoting its nuclear import, thereby acting as a positive regulator of Notch signaling. In Macaca fascicularis (Crab-eating macaque), this protein is Eukaryotic translation initiation factor 3 subunit F.